The following is a 423-amino-acid chain: Keratin, type I cytoskeletal 18 (423 aa).

The residue at position 2 (Ser-2) is an N-acetylserine. The head stretch occupies residues 2 to 71; that stretch reads SFTTRSTTFS…GLAGMGGIQT (70 aa). Phosphoserine is present on residues Ser-7, Ser-11, Ser-16, and Ser-19. A phosphoserine; alternate mark is found at Ser-31 and Ser-32. Ser-31 and Ser-32 each carry an O-linked (GlcNAc) serine; alternate glycan. The residue at position 35 (Ser-35) is a Phosphoserine. Tyr-37 bears the Phosphotyrosine mark. A Phosphoserine modification is found at Ser-43. Arg-46 carries the omega-N-methylarginine modification. A Phosphoserine; alternate modification is found at Ser-50. Residue Ser-50 is glycosylated (O-linked (GlcNAc) serine; alternate). Position 52 is a phosphoserine; by MAPKAPK2 and MAPKAPK3 (Ser-52). Ser-57 and Ser-60 each carry phosphoserine. Residues 62–366 form a necessary for interaction with PNN region; it reads GLAGMGGIQT…EALLNIKVKL (305 aa). Residues 69–121 form an interaction with TRADD region; that stretch reads IQTEKETMQDLNDRLASYLDKVKSLETENRRLESKIREHLEKKGPQGVRDWGH. Residues 72 to 107 form a coil 1A region; the sequence is EKETMQDLNDRLASYLDKVKSLETENRRLESKIREH. The region spanning 72–384 is the IF rod domain; sequence EKETMQDLND…RLLEDGEDFS (313 aa). Lys-73 is covalently cross-linked (Glycyl lysine isopeptide (Lys-Gly) (interchain with G-Cter in SUMO2)). Phosphoserine occurs at positions 85 and 92. The segment at 108–125 is linker 1; sequence LEKKGPQGVRDWGHYFKI. An N6-acetyllysine modification is found at Lys-124. The tract at residues 126 to 217 is coil 1B; it reads IEDLRAQIFA…KNHEEEVQGL (92 aa). Phosphoserine is present on residues Ser-137 and Ser-170. The segment at 218 to 241 is linker 12; it reads EAQIASSGLTVEVDAPKSQDLSKI. The segment at 236 to 384 is interaction with DNAJB6; it reads QDLSKIMADI…RLLEDGEDFS (149 aa). Lys-240 is covalently cross-linked (Glycyl lysine isopeptide (Lys-Gly) (interchain with G-Cter in SUMO2)). A coil 2 region spans residues 242-380; it reads MADIRAQYEA…ATYRRLLEDG (139 aa). A Phosphothreonine modification is found at Thr-295. Residue Ser-316 is modified to Phosphoserine. Residues Lys-363 and Lys-365 each participate in a glycyl lysine isopeptide (Lys-Gly) (interchain with G-Cter in SUMO2) cross-link. The tract at residues 381–423 is tail; that stretch reads EDFSLNDALDSSNSMQTVQKTTTRKIVDGRVVSETNDTRVLRH. Phosphoserine occurs at positions 384, 391, 392, and 394. Phosphothreonine is present on Thr-397.

The protein belongs to the intermediate filament family. In terms of assembly, heterotetramer of two type I and two type II keratins. KRT18 associates with KRT8. Interacts with PLEC isoform 1C, when in a heterodimer with KRT8. Interacts with PNN and mutated CFTR. Interacts with YWHAE, YWHAH and YWHAZ only when phosphorylated. Interacts with the thrombin-antithrombin complex. Interacts with DNAJB6, TCHP and TRADD. Interacts with FAM83H. Interacts with EPPK1. Interacts with PKP1 and PKP2. Post-translationally, phosphorylation increases by IL-6. Proteolytically cleaved by caspases during epithelial cell apoptosis. Cleavage occurs at Asp-231 by either caspase-3, caspas-6 or caspase-7. In terms of processing, O-GlcNAcylation increases solubility, and decreases stability by inducing proteasomal degradation. As to expression, expressed in endoderm, intestinal epithelial cells and in most extraembryonic tissues.

It is found in the nucleus matrix. The protein resides in the cytoplasm. The protein localises to the perinuclear region. Its subcellular location is the nucleus. It localises to the nucleolus. When phosphorylated, plays a role in filament reorganization. Involved in the delivery of mutated CFTR to the plasma membrane. Involved in the uptake of thrombin-antithrombin complexes by hepatic cells. Together with KRT8, is involved in interleukin-6 (IL-6)-mediated barrier protection. This Mus musculus (Mouse) protein is Keratin, type I cytoskeletal 18 (Krt18).